Reading from the N-terminus, the 557-residue chain is Formate--tetrahydrofolate ligase 2 (557 aa).

66 to 73 provides a ligand contact to ATP; that stretch reads TPAGEGKT.

This sequence belongs to the formate--tetrahydrofolate ligase family.

It catalyses the reaction (6S)-5,6,7,8-tetrahydrofolate + formate + ATP = (6R)-10-formyltetrahydrofolate + ADP + phosphate. Its pathway is one-carbon metabolism; tetrahydrofolate interconversion. This is Formate--tetrahydrofolate ligase 2 from Streptococcus pyogenes serotype M4 (strain MGAS10750).